We begin with the raw amino-acid sequence, 82 residues long: Large ribosomal subunit protein bL28 (82 aa).

The disordered stretch occupies residues 1-25 (MAKVDQITKKRAMTGNTRSHALNHS).

This sequence belongs to the bacterial ribosomal protein bL28 family.

This Malacoplasma penetrans (strain HF-2) (Mycoplasma penetrans) protein is Large ribosomal subunit protein bL28.